A 374-amino-acid polypeptide reads, in one-letter code: MKFELTTTDGDARRGQLTFSRGTVQTPAFMPVGTYGTVKGMLPRDIVDSGAEIILGNTFHLMLRPGTEVVKAHGDLHDFIQWQGPILTDSGGFQVFSLGDMRKISEEGVKFRSPIDGSEVFLDPEKAMQVQRDLGSDIVMIFDECTPYPATVHEARVSMELSLRWAKRSKDAHGDNPSALFGIVQGGMHESLRSESLKGLTEIGFDGYAIGGLSVGEPKEDMLRILNHLKTEMPADKPRYLMGVGKPEDLVEGVCRGIDMFDCVMPTRNARNGHLFTQAGVVKIRNAKHRHDTGPLDPTCDCYTCQNFSRAYLHHLDKCGEILGAQLNTIHNLRHYQTVMSELRAAIGKGELAQYVSHFYARQGKERPAIATQS.

Asp-89 functions as the Proton acceptor in the catalytic mechanism. Residues 89–93 (DSGGF), Asp-143, Gln-185, and Gly-212 each bind substrate. The tract at residues 243 to 249 (GVGKPED) is RNA binding. Catalysis depends on Asp-262, which acts as the Nucleophile. Residues 267–271 (TRNAR) form an RNA binding; important for wobble base 34 recognition region. Positions 300, 302, 305, and 331 each coordinate Zn(2+).

This sequence belongs to the queuine tRNA-ribosyltransferase family. Homodimer. Within each dimer, one monomer is responsible for RNA recognition and catalysis, while the other monomer binds to the replacement base PreQ1. It depends on Zn(2+) as a cofactor.

The catalysed reaction is 7-aminomethyl-7-carbaguanine + guanosine(34) in tRNA = 7-aminomethyl-7-carbaguanosine(34) in tRNA + guanine. Its pathway is tRNA modification; tRNA-queuosine biosynthesis. Its function is as follows. Catalyzes the base-exchange of a guanine (G) residue with the queuine precursor 7-aminomethyl-7-deazaguanine (PreQ1) at position 34 (anticodon wobble position) in tRNAs with GU(N) anticodons (tRNA-Asp, -Asn, -His and -Tyr). Catalysis occurs through a double-displacement mechanism. The nucleophile active site attacks the C1' of nucleotide 34 to detach the guanine base from the RNA, forming a covalent enzyme-RNA intermediate. The proton acceptor active site deprotonates the incoming PreQ1, allowing a nucleophilic attack on the C1' of the ribose to form the product. After dissociation, two additional enzymatic reactions on the tRNA convert PreQ1 to queuine (Q), resulting in the hypermodified nucleoside queuosine (7-(((4,5-cis-dihydroxy-2-cyclopenten-1-yl)amino)methyl)-7-deazaguanosine). In Saccharophagus degradans (strain 2-40 / ATCC 43961 / DSM 17024), this protein is Queuine tRNA-ribosyltransferase.